The sequence spans 161 residues: UPF0303 protein Spro_1996 (161 aa).

The protein belongs to the UPF0303 family.

This Serratia proteamaculans (strain 568) protein is UPF0303 protein Spro_1996.